We begin with the raw amino-acid sequence, 20 residues long: DGDALLKPCKLGDMQKLSSA.

It localises to the secreted. Functionally, prevents juvenile hormone from being hydrolyzed by general esterases by combining with it specifically. In Bombyx mori (Silk moth), this protein is Juvenile hormone-binding protein (JHBP).